Reading from the N-terminus, the 59-residue chain is Large ribosomal subunit protein uL30 (59 aa).

This sequence belongs to the universal ribosomal protein uL30 family. Part of the 50S ribosomal subunit.

The sequence is that of Large ribosomal subunit protein uL30 from Escherichia coli (strain UTI89 / UPEC).